The following is a 293-amino-acid chain: HTH-type transcriptional regulator HdfR (293 aa).

In terms of domain architecture, HTH lysR-type spans 1–58 (MDTELLKTFLEVSRTRHFGRAAESLYLTQSAVSFRIRQLENQLGANLFTRHRNNIRLT). Positions 18–37 (FGRAAESLYLTQSAVSFRIR) form a DNA-binding region, H-T-H motif.

It belongs to the LysR transcriptional regulatory family.

Functionally, negatively regulates the transcription of the flagellar master operon flhDC by binding to the upstream region of the operon. The polypeptide is HTH-type transcriptional regulator HdfR (Yersinia enterocolitica serotype O:8 / biotype 1B (strain NCTC 13174 / 8081)).